The chain runs to 407 residues: MSQNESGTIAIPMYDKDDAVLVLEDGQVYVGEPYGALGETTGEIVFATGMTGYQETLTDPSYDRQIVVQTFPHIGDTGVNSEDPESSRIWVAGYIVRDPSPNVSNWRAEGSLDDDLAKNGIVGLSHIDTRKLVRHLRSAGVMRAGIFSGDALTDQATGALKTIEQLLEDVKNTPQMQGLSLYDEVSTKGTYTIEPCGEYEGKEPLYTVAAVDLGIKGMTPHRMAERGCRVHVVPSTITFAEIENLNPDGVFFSNGPGDPEQAGPEIELLRQVLDAGYPFFGICFGNQLLGRALGFGTYKLKFGHRGINQPVKDLTTGKVEVTAHNHGFAVDAPIGKQVDAPFENGKYGKVFVSHIDLNDDVVEGLQCVDIPAFSVQYHPEAAAGPHDAAYLFDRFCELMKNNSKEGK.

The segment at 1-203 (MSQNESGTIA…EPCGEYEGKE (203 aa)) is CPSase. The L-glutamine site is built by Ser61, Gly255, and Gly257. One can recognise a Glutamine amidotransferase type-1 domain in the interval 207–405 (TVAAVDLGIK…CELMKNNSKE (199 aa)). Cys283 functions as the Nucleophile in the catalytic mechanism. L-glutamine-binding residues include Phe284, Gln287, Asn325, Gly327, and Phe328. Active-site residues include His378 and Glu380.

Belongs to the CarA family. In terms of assembly, composed of two chains; the small (or glutamine) chain promotes the hydrolysis of glutamine to ammonia, which is used by the large (or ammonia) chain to synthesize carbamoyl phosphate. Tetramer of heterodimers (alpha,beta)4.

The catalysed reaction is hydrogencarbonate + L-glutamine + 2 ATP + H2O = carbamoyl phosphate + L-glutamate + 2 ADP + phosphate + 2 H(+). It catalyses the reaction L-glutamine + H2O = L-glutamate + NH4(+). It participates in amino-acid biosynthesis; L-arginine biosynthesis; carbamoyl phosphate from bicarbonate: step 1/1. The protein operates within pyrimidine metabolism; UMP biosynthesis via de novo pathway; (S)-dihydroorotate from bicarbonate: step 1/3. Small subunit of the glutamine-dependent carbamoyl phosphate synthetase (CPSase). CPSase catalyzes the formation of carbamoyl phosphate from the ammonia moiety of glutamine, carbonate, and phosphate donated by ATP, constituting the first step of 2 biosynthetic pathways, one leading to arginine and/or urea and the other to pyrimidine nucleotides. The small subunit (glutamine amidotransferase) binds and cleaves glutamine to supply the large subunit with the substrate ammonia. This Bifidobacterium longum (strain DJO10A) protein is Carbamoyl phosphate synthase small chain.